Consider the following 500-residue polypeptide: Histidine ammonia-lyase (500 aa).

Residues 141–143 (ASG) constitute a cross-link (5-imidazolinone (Ala-Gly)). Ser-142 is subject to 2,3-didehydroalanine (Ser).

This sequence belongs to the PAL/histidase family. In terms of processing, contains an active site 4-methylidene-imidazol-5-one (MIO), which is formed autocatalytically by cyclization and dehydration of residues Ala-Ser-Gly.

The protein resides in the cytoplasm. It catalyses the reaction L-histidine = trans-urocanate + NH4(+). The protein operates within amino-acid degradation; L-histidine degradation into L-glutamate; N-formimidoyl-L-glutamate from L-histidine: step 1/3. This is Histidine ammonia-lyase from Shouchella clausii (strain KSM-K16) (Alkalihalobacillus clausii).